A 177-amino-acid chain; its full sequence is Ribonuclease alpha-sarcin (177 aa).

An N-terminal signal peptide occupies residues 1–27; sequence MVAIKNLVLVALTAVTALAVPSPLEAR. 2 disulfide bridges follow: Cys-33–Cys-175 and Cys-103–Cys-159. The active site involves His-77. The disordered stretch occupies residues 86 to 119; it reads DGKLPKGRTPIKFGKSDCDRPPKHSKDGNGKTDH. The segment covering 99–119 has biased composition (basic and acidic residues); it reads GKSDCDRPPKHSKDGNGKTDH. Glu-123 functions as the Proton acceptor in the catalytic mechanism. His-164 functions as the Proton donor in the catalytic mechanism.

The protein belongs to the ribonuclease U2 family.

The protein resides in the secreted. It catalyses the reaction a 28S rRNA containing guanosine-adenosine pair + H2O = an [RNA fragment]-3'-adenosine-3'-phosphate + a 5'-a hydroxy-guanosine-3'-[RNA fragment].. Alpha-sarcin is specific for purines in both single- and double-stranded RNA. Its toxic action on eukaryotic cells is the result of cleavage of a single phosphodiester bond in the 60S subunit of ribosomes. Inhibits both the EFl (elongation factor 1)-dependent binding of aminoacyl-tRNA and the GTP-dependent binding of EF2 (elongation factor 2) to ribosomes. The protein is Ribonuclease alpha-sarcin (sar) of Aspergillus giganteus.